The chain runs to 435 residues: Monodehydroascorbate reductase 2 (435 aa).

Residues 14-17, Glu-41, Arg-48, Lys-53, Ile-96, and 147-148 contribute to the FAD site; these read GGVA and RE. NAD(+) is bound by residues 172-178, Glu-196, Arg-202, and Gly-261; that span reads GGYIGLE. Residue 174–178 coordinates NADP(+); that stretch reads YIGLE. NADP(+) contacts are provided by Arg-202 and Gly-261. An FAD-binding site is contributed by Asp-298. Position 314-315 (314-315) interacts with NAD(+); the sequence is EH. 314-315 is an NADP(+) binding site; that stretch reads EH. An FAD-binding site is contributed by Val-316. Position 320 (Arg-320) interacts with L-ascorbate. Tyr-349 lines the FAD pocket. NAD(+) is bound at residue Tyr-349. NADP(+) is bound at residue Tyr-349. L-ascorbate is bound at residue Arg-351. Residue Ser-417 is modified to Phosphoserine.

It belongs to the FAD-dependent oxidoreductase family. Requires FAD as cofactor.

It is found in the cytoplasm. It catalyses the reaction 2 monodehydro-L-ascorbate radical + NADH + H(+) = 2 L-ascorbate + NAD(+). Functionally, catalyzes the conversion of monodehydroascorbate to ascorbate, oxidizing NADH in the process. In Arabidopsis thaliana (Mouse-ear cress), this protein is Monodehydroascorbate reductase 2.